A 561-amino-acid chain; its full sequence is Dihydroxy-acid dehydratase 2 (561 aa).

C53 is a binding site for [2Fe-2S] cluster. A Mg(2+)-binding site is contributed by D85. C126 contributes to the [2Fe-2S] cluster binding site. Mg(2+) contacts are provided by D127 and K128. At K128 the chain carries N6-carboxylysine. C195 lines the [2Fe-2S] cluster pocket. E446 contacts Mg(2+). S472 (proton acceptor) is an active-site residue.

This sequence belongs to the IlvD/Edd family. Homodimer. Requires [2Fe-2S] cluster as cofactor. Mg(2+) is required as a cofactor.

It catalyses the reaction (2R)-2,3-dihydroxy-3-methylbutanoate = 3-methyl-2-oxobutanoate + H2O. It carries out the reaction (2R,3R)-2,3-dihydroxy-3-methylpentanoate = (S)-3-methyl-2-oxopentanoate + H2O. It functions in the pathway amino-acid biosynthesis; L-isoleucine biosynthesis; L-isoleucine from 2-oxobutanoate: step 3/4. The protein operates within amino-acid biosynthesis; L-valine biosynthesis; L-valine from pyruvate: step 3/4. Functions in the biosynthesis of branched-chain amino acids. Catalyzes the dehydration of (2R,3R)-2,3-dihydroxy-3-methylpentanoate (2,3-dihydroxy-3-methylvalerate) into 2-oxo-3-methylpentanoate (2-oxo-3-methylvalerate) and of (2R)-2,3-dihydroxy-3-methylbutanoate (2,3-dihydroxyisovalerate) into 2-oxo-3-methylbutanoate (2-oxoisovalerate), the penultimate precursor to L-isoleucine and L-valine, respectively. The sequence is that of Dihydroxy-acid dehydratase 2 from Acinetobacter baylyi (strain ATCC 33305 / BD413 / ADP1).